A 62-amino-acid chain; its full sequence is Short neurotoxin 1 (62 aa).

Over residues 1–17 (MQCCNQQSSQPKTTTTC) the composition is skewed to polar residues. Residues 1–20 (MQCCNQQSSQPKTTTTCPGG) are disordered. Disulfide bonds link Cys-3/Cys-24, Cys-17/Cys-41, Cys-43/Cys-54, and Cys-55/Cys-60.

Belongs to the three-finger toxin family. Short-chain subfamily. Type I alpha-neurotoxin sub-subfamily. In terms of tissue distribution, expressed by the venom gland.

It localises to the secreted. In terms of biological role, binds to muscle nicotinic acetylcholine receptor (nAChR) and inhibit acetylcholine from binding to the receptor, thereby impairing neuromuscular transmission. This Acanthophis antarcticus (Common death adder) protein is Short neurotoxin 1.